The primary structure comprises 425 residues: Isocitrate dehydrogenase [NADP] (425 aa).

Threonine 114 contributes to the NADP(+) binding site. Positions 123, 125, 129, 139, and 162 each coordinate D-threo-isocitrate. Residue aspartate 316 coordinates Mg(2+). NADP(+)-binding positions include 348-354 (HGTAPKY), asparagine 361, tyrosine 400, and arginine 404.

It belongs to the isocitrate and isopropylmalate dehydrogenases family. In terms of assembly, homodimer. Mg(2+) serves as cofactor. Requires Mn(2+) as cofactor.

It carries out the reaction D-threo-isocitrate + NADP(+) = 2-oxoglutarate + CO2 + NADPH. Catalyzes the oxidative decarboxylation of isocitrate to 2-oxoglutarate and carbon dioxide with the concomitant reduction of NADP(+). The polypeptide is Isocitrate dehydrogenase [NADP] (icd) (Helicobacter pylori (strain J99 / ATCC 700824) (Campylobacter pylori J99)).